We begin with the raw amino-acid sequence, 338 residues long: Cytoskeleton protein RodZ (338 aa).

Topologically, residues 1 to 111 are cytoplasmic; sequence MNTEASQDQT…LGKKHKKRDG (111 aa). The HTH cro/C1-type domain occupies 19 to 79; the sequence is LRQAREALGL…KLVHLPEDEL (61 aa). A DNA-binding region (H-T-H motif) is located at residues 30-49; the sequence is QQMVAERLCLKVSTIRDIEE. A helical; Signal-anchor for type II membrane protein membrane pass occupies residues 112–132; it reads WLMSFTWLIVLVVLGLTGAWW. Topologically, residues 133-338 are periplasmic; it reads WQNHQAQQAE…RVARLTVGVE (206 aa). Polar residues-rich tracts occupy residues 151-163 and 180-195; these read SAQL…QSVP and PVAN…NGTV. Residues 151-253 are disordered; that stretch reads SAQLSQNGGQ…LPTADAGVTG (103 aa). A compositionally biased stretch (low complexity) spans 196 to 209; it reads PATSSAAPADTANN. Residues 210–241 show a composition bias toward polar residues; sequence GVNTTAPQGTTSAESAVVSPSQAPLPSVSTAQ.

The protein belongs to the RodZ family.

Its subcellular location is the cell inner membrane. Cytoskeletal protein that is involved in cell-shape control through regulation of the length of the long axis. The chain is Cytoskeleton protein RodZ from Yersinia enterocolitica serotype O:8 / biotype 1B (strain NCTC 13174 / 8081).